The chain runs to 377 residues: uncharacterized protein (377 aa).

Polar residues-rich tracts occupy residues 1–11 and 31–43; these read MSSIQGTSGSS and PSGQ…AVGK. Disordered stretches follow at residues 1-43, 109-141, and 328-377; these read MSSI…AVGK, SSEE…IARN, and SSSP…RGFQ. Residues 334 to 345 show a composition bias toward basic and acidic residues; sequence EDPRSLRDRLRD.

This sequence belongs to the chlamydial CPn_0499/CT_392/TC_0671 family.

This is an uncharacterized protein from Chlamydia trachomatis serovar D (strain ATCC VR-885 / DSM 19411 / UW-3/Cx).